A 276-amino-acid chain; its full sequence is Digeranylgeranylglyceryl phosphate synthase (276 aa).

8 consecutive transmembrane segments (helical) span residues 12 to 34, 38 to 60, 84 to 104, 107 to 127, 146 to 166, 202 to 222, 224 to 244, and 256 to 276; these read PHNC…GSVP, ILIL…NDYF, ALWY…LISL, FAFA…LKPL, GAIA…AFLV, VAAF…KAGV, VGYY…YLIL, and QLLL…AALM.

It belongs to the UbiA prenyltransferase family. DGGGP synthase subfamily. Requires Mg(2+) as cofactor.

It is found in the cell membrane. It catalyses the reaction sn-3-O-(geranylgeranyl)glycerol 1-phosphate + (2E,6E,10E)-geranylgeranyl diphosphate = 2,3-bis-O-(geranylgeranyl)-sn-glycerol 1-phosphate + diphosphate. The protein operates within membrane lipid metabolism; glycerophospholipid metabolism. Functionally, prenyltransferase that catalyzes the transfer of the geranylgeranyl moiety of geranylgeranyl diphosphate (GGPP) to the C2 hydroxyl of (S)-3-O-geranylgeranylglyceryl phosphate (GGGP). This reaction is the second ether-bond-formation step in the biosynthesis of archaeal membrane lipids. In Thermococcus gammatolerans (strain DSM 15229 / JCM 11827 / EJ3), this protein is Digeranylgeranylglyceryl phosphate synthase.